Consider the following 343-residue polypeptide: N-acetyl-gamma-glutamyl-phosphate reductase (343 aa).

The active site involves cysteine 148.

The protein belongs to the NAGSA dehydrogenase family. Type 1 subfamily.

It localises to the cytoplasm. The enzyme catalyses N-acetyl-L-glutamate 5-semialdehyde + phosphate + NADP(+) = N-acetyl-L-glutamyl 5-phosphate + NADPH + H(+). Its pathway is amino-acid biosynthesis; L-arginine biosynthesis; N(2)-acetyl-L-ornithine from L-glutamate: step 3/4. Functionally, catalyzes the NADPH-dependent reduction of N-acetyl-5-glutamyl phosphate to yield N-acetyl-L-glutamate 5-semialdehyde. In Caldicellulosiruptor saccharolyticus (strain ATCC 43494 / DSM 8903 / Tp8T 6331), this protein is N-acetyl-gamma-glutamyl-phosphate reductase.